Reading from the N-terminus, the 491-residue chain is Glutamyl-tRNA(Gln) amidotransferase subunit A (491 aa).

Catalysis depends on charge relay system residues Lys-78 and Ser-158. Residue Ser-182 is the Acyl-ester intermediate of the active site.

The protein belongs to the amidase family. GatA subfamily. In terms of assembly, heterotrimer of A, B and C subunits.

The enzyme catalyses L-glutamyl-tRNA(Gln) + L-glutamine + ATP + H2O = L-glutaminyl-tRNA(Gln) + L-glutamate + ADP + phosphate + H(+). Allows the formation of correctly charged Gln-tRNA(Gln) through the transamidation of misacylated Glu-tRNA(Gln) in organisms which lack glutaminyl-tRNA synthetase. The reaction takes place in the presence of glutamine and ATP through an activated gamma-phospho-Glu-tRNA(Gln). This Nitrobacter winogradskyi (strain ATCC 25391 / DSM 10237 / CIP 104748 / NCIMB 11846 / Nb-255) protein is Glutamyl-tRNA(Gln) amidotransferase subunit A.